A 495-amino-acid chain; its full sequence is Glycerol kinase (495 aa).

Thr-11 is a binding site for ADP. Thr-11, Thr-12, and Ser-13 together coordinate ATP. Thr-11 provides a ligand contact to sn-glycerol 3-phosphate. Residues Arg-81, Glu-82, Tyr-133, and Asp-242 each contribute to the sn-glycerol 3-phosphate site. Glycerol-binding residues include Arg-81, Glu-82, Tyr-133, Asp-242, and Gln-243. Residues Thr-264, Gly-307, Gly-407, and Asn-411 each contribute to the ADP site. ATP-binding residues include Thr-264, Gly-307, and Gly-407.

This sequence belongs to the FGGY kinase family.

The enzyme catalyses glycerol + ATP = sn-glycerol 3-phosphate + ADP + H(+). Its pathway is polyol metabolism; glycerol degradation via glycerol kinase pathway; sn-glycerol 3-phosphate from glycerol: step 1/1. With respect to regulation, inhibited by fructose 1,6-bisphosphate (FBP). Its function is as follows. Key enzyme in the regulation of glycerol uptake and metabolism. Catalyzes the phosphorylation of glycerol to yield sn-glycerol 3-phosphate. This Thermus brockianus protein is Glycerol kinase.